Consider the following 256-residue polypeptide: 5'-nucleotidase SurE (256 aa).

Positions 13, 14, 44, and 101 each coordinate a divalent metal cation.

Belongs to the SurE nucleotidase family. It depends on a divalent metal cation as a cofactor.

The protein localises to the cytoplasm. It carries out the reaction a ribonucleoside 5'-phosphate + H2O = a ribonucleoside + phosphate. Functionally, nucleotidase that shows phosphatase activity on nucleoside 5'-monophosphates. This Porphyromonas gingivalis (strain ATCC 33277 / DSM 20709 / CIP 103683 / JCM 12257 / NCTC 11834 / 2561) protein is 5'-nucleotidase SurE.